The primary structure comprises 412 residues: Putative competence-damage inducible protein (412 aa).

This sequence belongs to the CinA family.

This Bacillus cereus (strain ATCC 10987 / NRS 248) protein is Putative competence-damage inducible protein.